Here is a 287-residue protein sequence, read N- to C-terminus: Protease HtpX (287 aa).

2 helical membrane-spanning segments follow: residues 4–24 (IFLL…VMSI) and 33–53 (GGLL…SLAI). Residue His139 coordinates Zn(2+). The active site involves Glu140. Residue His143 coordinates Zn(2+). 2 consecutive transmembrane segments (helical) span residues 154 to 174 (LIQG…AGII) and 195 to 215 (AVVF…VAYF). Position 220 (Glu220) interacts with Zn(2+).

This sequence belongs to the peptidase M48B family. The cofactor is Zn(2+).

Its subcellular location is the cell inner membrane. This Shewanella oneidensis (strain ATCC 700550 / JCM 31522 / CIP 106686 / LMG 19005 / NCIMB 14063 / MR-1) protein is Protease HtpX.